A 61-amino-acid chain; its full sequence is Tryptophyllin-1 (61 aa).

The first 22 residues, 1-22 (MDILKKSLFLALFLGLVSISFC), serve as a signal peptide directing secretion. The propeptide occupies 23 to 53 (DEEKRQDDDESNESEEKKEIHEEGSQEERRE). Residues 24 to 61 (EEKRQDDDESNESEEKKEIHEEGSQEERREKPPPWVPV) are disordered. Basic and acidic residues predominate over residues 36 to 55 (SEEKKEIHEEGSQEERREKP).

Expressed by the skin glands.

Its subcellular location is the secreted. The synthetic peptide inhibits bradykinin-induced relaxation of rat tail artery smooth muscle, and also has anti-proliferative effects on the human prostate cancer cell lines LNCaP, PC3 and DU145. This Phyllomedusa sauvagei (Sauvage's leaf frog) protein is Tryptophyllin-1.